The chain runs to 295 residues: GTPase Era (295 aa).

Residues Lys-7–Trp-176 form the Era-type G domain. Positions Gly-15–Ser-22 are G1. Position 15–22 (Gly-15–Ser-22) interacts with GTP. Residues Gln-41–Ser-45 form a G2 region. The interval Asp-62–Gly-65 is G3. GTP-binding positions include Asp-62–Ile-66 and Asn-124–Asp-127. Positions Asn-124–Asp-127 are G4. The G5 stretch occupies residues Ile-152–Ala-154. The KH type-2 domain maps to Leu-204 to Ala-281.

The protein belongs to the TRAFAC class TrmE-Era-EngA-EngB-Septin-like GTPase superfamily. Era GTPase family. Monomer.

It localises to the cytoplasm. Its subcellular location is the cell inner membrane. Functionally, an essential GTPase that binds both GDP and GTP, with rapid nucleotide exchange. Plays a role in 16S rRNA processing and 30S ribosomal subunit biogenesis and possibly also in cell cycle regulation and energy metabolism. The polypeptide is GTPase Era (Rickettsia typhi (strain ATCC VR-144 / Wilmington)).